The primary structure comprises 395 residues: Phosphoglycerate kinase (395 aa).

Substrate-binding positions include aspartate 21 to asparagine 23, arginine 36, histidine 59 to arginine 62, arginine 114, and arginine 147. ATP-binding positions include lysine 197, glutamate 322, and glycine 352 to threonine 355.

It belongs to the phosphoglycerate kinase family. In terms of assembly, monomer.

Its subcellular location is the cytoplasm. The catalysed reaction is (2R)-3-phosphoglycerate + ATP = (2R)-3-phospho-glyceroyl phosphate + ADP. It functions in the pathway carbohydrate degradation; glycolysis; pyruvate from D-glyceraldehyde 3-phosphate: step 2/5. The sequence is that of Phosphoglycerate kinase from Roseobacter denitrificans (strain ATCC 33942 / OCh 114) (Erythrobacter sp. (strain OCh 114)).